We begin with the raw amino-acid sequence, 195 residues long: Probable peroxygenase 4 (195 aa).

In terms of domain architecture, EF-hand spans 14 to 49 (EEDNFLQRHVAFFDRNKDGIVYPSETFQGFRAIGCG). His22 provides a ligand contact to heme. Asp27, Asn29, Asp31, and Glu38 together coordinate Ca(2+). A Proline-knot motif is present at residues 70–79 (PGKGFSIWFP). The residue at position 177 (Ser177) is a Phosphoserine.

The protein belongs to the caleosin family. As to quaternary structure, homodimer. It depends on heme b as a cofactor. The cofactor is Ca(2+). In terms of tissue distribution, expressed in roots, leaves, stems, shoots, flowers and germinated seeds. Barely detected in dry seeds prior to germination. Preferentially expressed in vascular bundles and in guard cells.

The protein resides in the lipid droplet. The catalysed reaction is RH + ROOH = ROH + ROH.. In terms of biological role, calcium-binding peroxygenase involved in the degradation of storage lipid in oil bodies. May be involved in the interaction between oil bodies and vacuoles during seed germination. Acts as a negative regulator of abscisic acid responses in non-seed tissues. The polypeptide is Probable peroxygenase 4 (PXG4) (Arabidopsis thaliana (Mouse-ear cress)).